The sequence spans 396 residues: Putative glycosyltransferase HOC1 (396 aa).

Over 2–13 (AKTTKRASSFRR) the chain is Cytoplasmic. The helical; Signal-anchor for type II membrane protein transmembrane segment at 14 to 34 (LMIFAIIALISLAFGVRYLFH) threads the bilayer. The Lumenal segment spans residues 35–396 (NSNATDLQKI…WKNTPKVEQK (362 aa)). Asn37 is a glycosylation site (N-linked (GlcNAc...) asparagine).

The protein belongs to the glycosyltransferase 32 family. Component of the M-Pol II complex composed of ANP1, MNN9, MNN10, MNN11 and HOC1.

The protein resides in the golgi apparatus. The protein localises to the cis-Golgi network membrane. The M-Pol II complex possesses alpha-1,6-mannosyltransferase activity and is probably involved in the elongation of the mannan backbone of N-linked glycans on cell wall and periplasmic proteins. This chain is Putative glycosyltransferase HOC1 (HOC1), found in Saccharomyces cerevisiae (strain ATCC 204508 / S288c) (Baker's yeast).